The chain runs to 492 residues: Peptidyl-prolyl cis-trans isomerase-like 4 (492 aa).

The PPIase cyclophilin-type domain occupies 1–161; the sequence is MAVLLETTLG…QDIRINHTVI (161 aa). The interval 167–188 is disordered; sequence DDPPDLLIPDRSPEPTKEQLDS. Positions 177–187 are enriched in basic and acidic residues; it reads RSPEPTKEQLD. Serine 178 is subject to Phosphoserine. Threonine 182 carries the phosphothreonine modification. Residues lysine 201, lysine 212, and lysine 218 each participate in a glycyl lysine isopeptide (Lys-Gly) (interchain with G-Cter in SUMO2) cross-link. The RRM domain occupies 240-318; that stretch reads NVLFVCKLNP…RRIHVDFSQS (79 aa). Glycyl lysine isopeptide (Lys-Gly) (interchain with G-Cter in SUMO2) cross-links involve residues lysine 321 and lysine 362. Disordered stretches follow at residues 368 to 409 and 423 to 492; these read DEQG…NPNQ and EESC…SKYR. Positions 377 to 390 are enriched in basic residues; sequence SHSHTSKKHKKKTR. Serine 393 carries the post-translational modification Phosphoserine. A Glycyl lysine isopeptide (Lys-Gly) (interchain with G-Cter in SUMO2) cross-link involves residue lysine 405. Residues 426-436 show a composition bias toward basic and acidic residues; it reads CWEKQKNEKRD. Lysine 460 participates in a covalent cross-link: Glycyl lysine isopeptide (Lys-Gly) (interchain with G-Cter in SUMO2). At serine 471 the chain carries Phosphoserine. Residues 473 to 485 show a composition bias toward basic residues; the sequence is KRDRSRSPKKSKA.

Belongs to the cyclophilin-type PPIase family. PPIL4 subfamily.

Its subcellular location is the nucleus. It carries out the reaction [protein]-peptidylproline (omega=180) = [protein]-peptidylproline (omega=0). Functionally, PPIases accelerate the folding of proteins. It catalyzes the cis-trans isomerization of proline imidic peptide bonds in oligopeptides. The chain is Peptidyl-prolyl cis-trans isomerase-like 4 (Ppil4) from Mus musculus (Mouse).